A 589-amino-acid chain; its full sequence is MGDVLISDRPPSPARLSHTSEKHPRVTLTELNVLRRHRELCDVVINVSGRKIFAHRVILSACSPYFRAMFTGELEESRQTEVTIRDIDENAMELLIDFCYTSHIVVEESNVQTLLPAACLLQLAEIQDICCEFLKRQLDPTNCLGIRAFADTHSCRELLRIADKFTQHNFQEVMESEEFLLLPVGQLVDIICSDELNVRSEEQVFNAVMAWLKYNVAERRQHLAQVLQHVRMPLLSPKFLVGTVGSDLLVRSDEACRDLVDEAKNYLLLPQERPLMQGPRTRPRKPTRRGEVLFAVGGWCSGDAIASVERFDPETADWKMVAPMSKRRCGVGVAVLNDLLYAVGGHDGQSYLNSIERYDPQTNQWSCDVAPTTSCRTSVGVAVLDGFLYAVGGQDGVQCLNHVERYDPKENKWSKVAPMTTRRLGVAVAVLGGYLYAIGGSDGQCPLNTVERYDPRQNKWCAVSPMSTRRKHLGCAVFNNFIYAVGGRDDCMELSSAERYNPHTNSWSPIVAMTSRRSGVGLAVVNGQLYAVGGFDGTAYLKTIEVYDPETNQWRLCGCMNYRRLGGGVGVMRAPQTENYMWIRKDSVV.

The segment at 1 to 22 (MGDVLISDRPPSPARLSHTSEK) is disordered. The 68-residue stretch at 41 to 108 (CDVVINVSGR…CYTSHIVVEE (68 aa)) folds into the BTB domain. The 103-residue stretch at 143–245 (CLGIRAFADT…SPKFLVGTVG (103 aa)) folds into the BACK domain. 6 Kelch repeats span residues 292–338 (VLFA…VLND), 340–386 (LYAV…VLDG), 387–433 (FLYA…VLGG), 435–480 (LYAI…VFNN), 482–527 (IYAV…VVNG), and 528–574 (QLYA…VMRA).

It functions in the pathway protein modification; protein ubiquitination. In terms of biological role, probable substrate-specific adapter of an E3 ubiquitin-protein ligase complex which mediates the ubiquitination and subsequent proteasomal degradation of target proteins. May have a role in synapse differentiation and growth. This chain is Kelch-like protein diablo, found in Aedes aegypti (Yellowfever mosquito).